Consider the following 389-residue polypeptide: Succinate--CoA ligase [ADP-forming] subunit beta (389 aa).

One can recognise an ATP-grasp domain in the interval 9–244 (KQLLAEYGIP…KTQEDETEVT (236 aa)). ATP is bound by residues Lys46, 53–55 (GRG), Gly102, and Glu107. Residues Asn199 and Asp213 each coordinate Mg(2+). Substrate is bound by residues Asn264 and 321–323 (GIV).

It belongs to the succinate/malate CoA ligase beta subunit family. In terms of assembly, heterotetramer of two alpha and two beta subunits. The cofactor is Mg(2+).

It carries out the reaction succinate + ATP + CoA = succinyl-CoA + ADP + phosphate. It catalyses the reaction GTP + succinate + CoA = succinyl-CoA + GDP + phosphate. Its pathway is carbohydrate metabolism; tricarboxylic acid cycle; succinate from succinyl-CoA (ligase route): step 1/1. Functionally, succinyl-CoA synthetase functions in the citric acid cycle (TCA), coupling the hydrolysis of succinyl-CoA to the synthesis of either ATP or GTP and thus represents the only step of substrate-level phosphorylation in the TCA. The beta subunit provides nucleotide specificity of the enzyme and binds the substrate succinate, while the binding sites for coenzyme A and phosphate are found in the alpha subunit. In Xanthomonas campestris pv. campestris (strain 8004), this protein is Succinate--CoA ligase [ADP-forming] subunit beta.